Here is a 130-residue protein sequence, read N- to C-terminus: L-aspartate semialdehyde sulfurtransferase iron-sulfur subunit (130 aa).

4Fe-4S ferredoxin-type domains are found at residues 72 to 101 (RPIH…FDET) and 102 to 130 (WSLC…KLGE). 8 residues coordinate [4Fe-4S] cluster: C81, C84, C87, C91, C111, C114, C117, and C121.

May form a complex with MA_1821. [4Fe-4S] cluster is required as a cofactor.

It functions in the pathway amino-acid biosynthesis. Required for O-acetylhomoserine sulfhydrylase (OAHS)-independent homocysteine (Hcy) biosynthesis. Together with MA_1821, catalyzes the condensation of sulfide with aspartate semialdehyde to generate homocysteine. May be involved in the reduction of the disulfide formed in MA_1821. The polypeptide is L-aspartate semialdehyde sulfurtransferase iron-sulfur subunit (Methanosarcina acetivorans (strain ATCC 35395 / DSM 2834 / JCM 12185 / C2A)).